The sequence spans 353 residues: Rhodopsin (353 aa).

Over 1–36 the chain is Extracellular; that stretch reads MNGTEGPYFYIPMVNTTGIVRSPYEYPQYYLVNPAA. Asn2 and Asn15 each carry an N-linked (GlcNAc...) asparagine glycan. Residues 37–61 form a helical membrane-spanning segment; the sequence is YAALGAYMFLLILVGFPVNFLTLYV. The Cytoplasmic portion of the chain corresponds to 62 to 73; the sequence is TLEHKKLRTPLN. The helical transmembrane segment at 74-96 threads the bilayer; the sequence is YILLNLAVADLFMVLGGFTTTMY. The Extracellular portion of the chain corresponds to 97–110; the sequence is TSMHGYFVLGRLGC. Cys110 and Cys187 are disulfide-bonded. The chain crosses the membrane as a helical span at residues 111–133; it reads NVEGFFATLGGEIALWSLVVLAI. Positions 134 to 136 match the 'Ionic lock' involved in activated form stabilization motif; that stretch reads ERW. Residues 134–152 are Cytoplasmic-facing; sequence ERWVVVCKPISNFRFSEDH. A helical membrane pass occupies residues 153-173; sequence AIMGLAFTWVMASACAVPPLV. The Extracellular segment spans residues 174 to 202; that stretch reads GWSRYIPEGMQCSCGIDYYTRAEGFNNES. Asn200 carries an N-linked (GlcNAc...) asparagine glycan. The helical transmembrane segment at 203 to 224 threads the bilayer; the sequence is FVIYMFVCHFLIPLVVVFFCYG. Over 225–252 the chain is Cytoplasmic; that stretch reads RLLCAVKEAAAAQQESETTQRAEREVSR. A helical membrane pass occupies residues 253-274; sequence MVVIMVVAFLVCWCPYAGVAWY. Over 275–286 the chain is Extracellular; it reads IFTHQGSEFGPL. The helical transmembrane segment at 287-308 threads the bilayer; that stretch reads FMTFPAFFAKSSSIYNPMIYIC. Position 296 is an N6-(retinylidene)lysine (Lys296). At 309–353 the chain is on the cytoplasmic side; it reads MNKQFRHCMITTLCCGKNPFEEEEGASTTSKTEASSVSSSSVSPA. S-palmitoyl cysteine attachment occurs at residues Cys322 and Cys323. Positions 330-353 are disordered; sequence EEEGASTTSKTEASSVSSSSVSPA. Over residues 334-353 the composition is skewed to low complexity; the sequence is ASTTSKTEASSVSSSSVSPA.

It belongs to the G-protein coupled receptor 1 family. Opsin subfamily. Post-translationally, phosphorylated on some or all of the serine and threonine residues present in the C-terminal region. Contains one covalently linked retinal chromophore.

The protein resides in the membrane. The protein localises to the cell projection. Its subcellular location is the cilium. It is found in the photoreceptor outer segment. Functionally, photoreceptor required for image-forming vision at low light intensity. While most salt water fish species use retinal as chromophore, most freshwater fish use 3-dehydroretinal, or a mixture of retinal and 3-dehydroretinal. Light-induced isomerization of 11-cis to all-trans retinal triggers a conformational change that activates signaling via G-proteins. Subsequent receptor phosphorylation mediates displacement of the bound G-protein alpha subunit by arrestin and terminates signaling. This chain is Rhodopsin (rho), found in Chelon labrosus (Thicklip grey mullet).